The chain runs to 755 residues: Sentrin-specific protease 5 (755 aa).

Positions 268-321 are disordered; it reads VQKVTGDHQETRRENGEGGSCSPFPSPEPKDPSCRHQPYFPDMDSSAVVKGTNS. Positions 272–283 are enriched in basic and acidic residues; that stretch reads TGDHQETRRENG. Residues 567-724 form a protease region; sequence HMLDMDDLAT…VFVLQYCKCL (158 aa). Active-site residues include His-646, Asp-663, and Cys-713.

This sequence belongs to the peptidase C48 family. Interacts with CCAR2.

It localises to the nucleus. It is found in the nucleolus. Protease that catalyzes two essential functions in the SUMO pathway: processing of full-length SUMO3 to its mature form and deconjugation of SUMO2 and SUMO3 from targeted proteins. Has weak proteolytic activity against full-length SUMO1 or SUMO1 conjugates. Required for cell division. In Homo sapiens (Human), this protein is Sentrin-specific protease 5 (SENP5).